We begin with the raw amino-acid sequence, 895 residues long: Stonin-2 (895 aa).

Disordered stretches follow at residues 15–119 (WVSF…PPHK), 145–222 (SESS…APPV), and 234–280 (EDNE…KSTL). The segment covering 64–73 (SHSEQDDSSE) has biased composition (basic and acidic residues). The segment covering 145 to 193 (SESSWTTHSEDTSSPSVAPSYTDLQLINTEEQASGRASGTDSTDNSSSL) has biased composition (polar residues). A compositionally biased stretch (pro residues) spans 241–251 (PSPPVPSPKKP). T253 bears the Phosphothreonine mark. S278 and S299 each carry phosphoserine. 2 short sequence motifs (NPF) span residues 310–312 (NPF) and 326–328 (NPF). Positions 386–421 (QIDDPDPVGNTALPDDDPTASVELDAPSPASALSQP) are disordered. The SHD domain maps to 424–557 (GWPMMLRIPE…DLPVLSMDLS (134 aa)). The MHD domain occupies 565–872 (EEEITVDVRD…AHYSYKVEIE (308 aa)). S759 carries the post-translational modification Phosphoserine.

This sequence belongs to the Stoned B family. As to quaternary structure, interacts with the second C2 domain of synaptotagmins SYT1 and SYT2. Interacts with EPS15, EPS15R and ITSN1. Interacts indirectly with the AP-2 adapter complex. Interacts with TOR1A and COPS4; the interaction controls STON2 protein stability. Phosphorylated in vitro by PKD. Post-translationally, neddylated; deneddylated via its interaction with the COP9 signalosome (CSN) complex through TOR1A and COPS4. In terms of processing, ubiquitinated; leading to its degradation.

Its subcellular location is the cytoplasm. It is found in the membrane. The protein resides in the synapse. The protein localises to the synaptosome. Adapter protein involved in endocytic machinery. Involved in the synaptic vesicle recycling. May facilitate clathrin-coated vesicle uncoating. This chain is Stonin-2 (Ston2), found in Mus musculus (Mouse).